A 237-amino-acid chain; its full sequence is Ribosomal RNA small subunit methyltransferase G (237 aa).

S-adenosyl-L-methionine contacts are provided by residues glycine 78, phenylalanine 83, 129–130, and arginine 148; that span reads AE.

It belongs to the methyltransferase superfamily. RNA methyltransferase RsmG family.

The protein localises to the cytoplasm. In terms of biological role, specifically methylates the N7 position of a guanine in 16S rRNA. The polypeptide is Ribosomal RNA small subunit methyltransferase G (Streptococcus pyogenes serotype M12 (strain MGAS9429)).